The following is a 138-amino-acid chain: Acidic phospholipase A2 6 (138 aa).

The first 16 residues, 1 to 16 (MRTLWIMAVLLVGVEG), serve as a signal peptide directing secretion. 7 disulfides stabilise this stretch: Cys-42/Cys-131, Cys-44/Cys-60, Cys-59/Cys-111, Cys-65/Cys-138, Cys-66/Cys-104, Cys-73/Cys-97, and Cys-91/Cys-102. Ca(2+) is bound by residues Tyr-43, Gly-45, and Gly-47. Residue His-63 is part of the active site. Position 64 (Asp-64) interacts with Ca(2+). The active site involves Asp-105.

Belongs to the phospholipase A2 family. Group II subfamily. D49 sub-subfamily. In terms of assembly, homodimer. The cofactor is Ca(2+). Expressed by the venom gland.

The protein resides in the secreted. The enzyme catalyses a 1,2-diacyl-sn-glycero-3-phosphocholine + H2O = a 1-acyl-sn-glycero-3-phosphocholine + a fatty acid + H(+). In terms of biological role, snake venom phospholipase A2 (PLA2) that has high lipolytic activity. PLA2 catalyzes the calcium-dependent hydrolysis of the 2-acyl groups in 3-sn-phosphoglycerides. This is Acidic phospholipase A2 6 from Craspedocephalus gramineus (Bamboo pit viper).